The sequence spans 192 residues: Immunoglobulin superfamily member 23 (192 aa).

Residues 1-26 form a disordered region; that stretch reads MRAKPQSPLPRNPVPAWSPPTTTTDP. The span at 7-18 shows a compositional bias: pro residues; the sequence is SPLPRNPVPAWS. In terms of domain architecture, Ig-like spans 20–128; sequence PTTTTDPMLE…QLVSEPVTIS (109 aa). The N-linked (GlcNAc...) asparagine glycan is linked to Asn-64. The chain crosses the membrane as a helical span at residues 158–178; sequence LLAAGILGAGALIAGMCFIII.

In terms of tissue distribution, expressed in bone and small intestine. Highly expressed in osteoclasts, and low expressed in osteoblasts and peripheral blood mononuclear cells (PBMCs).

Its subcellular location is the cell membrane. In terms of biological role, may be involved in osteoclast differentiation. The sequence is that of Immunoglobulin superfamily member 23 from Homo sapiens (Human).